The following is a 721-amino-acid chain: Catalase-peroxidase 1 (721 aa).

The segment at residues 98–223 (WHAAGSYRVA…LAAVQMGLIY (126 aa)) is a cross-link (tryptophyl-tyrosyl-methioninium (Trp-Tyr) (with M-249)). The Proton acceptor role is filled by His99. Residues 223 to 249 (YVNPEGVNGQPDPLRTAQDVRVTFGRM) constitute a cross-link (tryptophyl-tyrosyl-methioninium (Tyr-Met) (with W-98)). His264 is a binding site for heme b.

It belongs to the peroxidase family. Peroxidase/catalase subfamily. Homodimer or homotetramer. Heme b is required as a cofactor. Post-translationally, formation of the three residue Trp-Tyr-Met cross-link is important for the catalase, but not the peroxidase activity of the enzyme.

The enzyme catalyses H2O2 + AH2 = A + 2 H2O. It catalyses the reaction 2 H2O2 = O2 + 2 H2O. Bifunctional enzyme with both catalase and broad-spectrum peroxidase activity. The polypeptide is Catalase-peroxidase 1 (Legionella pneumophila subsp. pneumophila (strain Philadelphia 1 / ATCC 33152 / DSM 7513)).